Consider the following 258-residue polypeptide: Gamma-secretase subunit Aph-1b (258 aa).

7 consecutive transmembrane segments (helical) span residues 3 to 23, 32 to 52, 70 to 90, 118 to 138, 161 to 181, 187 to 207, and 214 to 234; these read VAVF…LFMF, VIFL…SSLV, GLLI…RYGY, AYVS…VNIL, AFMT…FFEA, WWAL…TFVN, and LIPT…CAGG.

It belongs to the APH-1 family. As to quaternary structure, component of the gamma-secretase complex, a complex composed of a presenilin homodimer (PSEN1 or PSEN2), nicastrin (NCSTN), APH1 and PEN2.

The protein resides in the membrane. Essential subunit of the gamma-secretase complex, an endoprotease complex that catalyzes the intramembrane cleavage of integral proteins such as Notch receptors. It may represent a stabilizing cofactor for the presenilin homodimer that promotes the formation of a stable complex. This chain is Gamma-secretase subunit Aph-1b (aph1b), found in Danio rerio (Zebrafish).